A 308-amino-acid chain; its full sequence is Lipoyl synthase (308 aa).

The [4Fe-4S] cluster site is built by Cys48, Cys53, Cys59, Cys74, Cys78, Cys81, and Ser287. Positions 60–277 (WSRHTATYLA…RSVGEALGLF (218 aa)) constitute a Radical SAM core domain.

Belongs to the radical SAM superfamily. Lipoyl synthase family. The cofactor is [4Fe-4S] cluster.

Its subcellular location is the cytoplasm. It catalyses the reaction [[Fe-S] cluster scaffold protein carrying a second [4Fe-4S](2+) cluster] + N(6)-octanoyl-L-lysyl-[protein] + 2 oxidized [2Fe-2S]-[ferredoxin] + 2 S-adenosyl-L-methionine + 4 H(+) = [[Fe-S] cluster scaffold protein] + N(6)-[(R)-dihydrolipoyl]-L-lysyl-[protein] + 4 Fe(3+) + 2 hydrogen sulfide + 2 5'-deoxyadenosine + 2 L-methionine + 2 reduced [2Fe-2S]-[ferredoxin]. It functions in the pathway protein modification; protein lipoylation via endogenous pathway; protein N(6)-(lipoyl)lysine from octanoyl-[acyl-carrier-protein]: step 2/2. Functionally, catalyzes the radical-mediated insertion of two sulfur atoms into the C-6 and C-8 positions of the octanoyl moiety bound to the lipoyl domains of lipoate-dependent enzymes, thereby converting the octanoylated domains into lipoylated derivatives. In Chlamydia muridarum (strain MoPn / Nigg), this protein is Lipoyl synthase.